Here is a 131-residue protein sequence, read N- to C-terminus: Holo-[acyl-carrier-protein] synthase (131 aa).

2 residues coordinate Mg(2+): Asp8 and Glu59.

It belongs to the P-Pant transferase superfamily. AcpS family. It depends on Mg(2+) as a cofactor.

It is found in the cytoplasm. The catalysed reaction is apo-[ACP] + CoA = holo-[ACP] + adenosine 3',5'-bisphosphate + H(+). Functionally, transfers the 4'-phosphopantetheine moiety from coenzyme A to a Ser of acyl-carrier-protein. The chain is Holo-[acyl-carrier-protein] synthase from Orientia tsutsugamushi (strain Ikeda) (Rickettsia tsutsugamushi).